The chain runs to 267 residues: Acyl-[acyl-carrier-protein]--UDP-N-acetylglucosamine O-acyltransferase (267 aa).

This sequence belongs to the transferase hexapeptide repeat family. LpxA subfamily. Homotrimer.

The protein resides in the cytoplasm. The catalysed reaction is a (3R)-hydroxyacyl-[ACP] + UDP-N-acetyl-alpha-D-glucosamine = a UDP-3-O-[(3R)-3-hydroxyacyl]-N-acetyl-alpha-D-glucosamine + holo-[ACP]. Its pathway is glycolipid biosynthesis; lipid IV(A) biosynthesis; lipid IV(A) from (3R)-3-hydroxytetradecanoyl-[acyl-carrier-protein] and UDP-N-acetyl-alpha-D-glucosamine: step 1/6. In terms of biological role, involved in the biosynthesis of lipid A, a phosphorylated glycolipid that anchors the lipopolysaccharide to the outer membrane of the cell. The protein is Acyl-[acyl-carrier-protein]--UDP-N-acetylglucosamine O-acyltransferase of Cupriavidus taiwanensis (strain DSM 17343 / BCRC 17206 / CCUG 44338 / CIP 107171 / LMG 19424 / R1) (Ralstonia taiwanensis (strain LMG 19424)).